A 429-amino-acid chain; its full sequence is Serine hydroxymethyltransferase (429 aa).

Residue 120–122 participates in (6S)-5,6,7,8-tetrahydrofolate binding; that stretch reads GHI. At K226 the chain carries N6-(pyridoxal phosphate)lysine.

It belongs to the SHMT family. In terms of assembly, homodimer. Pyridoxal 5'-phosphate serves as cofactor.

It localises to the cytoplasm. Its pathway is amino-acid biosynthesis; glycine biosynthesis; glycine from L-serine: step 1/1. Its function is as follows. Catalyzes the reversible interconversion of serine and glycine with a modified folate serving as the one-carbon carrier. Also exhibits a pteridine-independent aldolase activity toward beta-hydroxyamino acids, producing glycine and aldehydes, via a retro-aldol mechanism. The protein is Serine hydroxymethyltransferase of Pyrobaculum arsenaticum (strain DSM 13514 / JCM 11321 / PZ6).